Here is a 483-residue protein sequence, read N- to C-terminus: Protein nucleotidyltransferase YdiU (483 aa).

Residues Gly-100, Gly-102, Arg-103, Lys-123, Asp-135, Gly-136, Arg-189, and Arg-196 each coordinate ATP. The Proton acceptor role is filled by Asp-265. 2 residues coordinate Mg(2+): Asn-266 and Asp-275. Asp-275 lines the ATP pocket.

The protein belongs to the SELO family. Requires Mg(2+) as cofactor. It depends on Mn(2+) as a cofactor.

It carries out the reaction L-seryl-[protein] + ATP = 3-O-(5'-adenylyl)-L-seryl-[protein] + diphosphate. The catalysed reaction is L-threonyl-[protein] + ATP = 3-O-(5'-adenylyl)-L-threonyl-[protein] + diphosphate. The enzyme catalyses L-tyrosyl-[protein] + ATP = O-(5'-adenylyl)-L-tyrosyl-[protein] + diphosphate. It catalyses the reaction L-histidyl-[protein] + UTP = N(tele)-(5'-uridylyl)-L-histidyl-[protein] + diphosphate. It carries out the reaction L-seryl-[protein] + UTP = O-(5'-uridylyl)-L-seryl-[protein] + diphosphate. The catalysed reaction is L-tyrosyl-[protein] + UTP = O-(5'-uridylyl)-L-tyrosyl-[protein] + diphosphate. In terms of biological role, nucleotidyltransferase involved in the post-translational modification of proteins. It can catalyze the addition of adenosine monophosphate (AMP) or uridine monophosphate (UMP) to a protein, resulting in modifications known as AMPylation and UMPylation. This is Protein nucleotidyltransferase YdiU from Gloeobacter violaceus (strain ATCC 29082 / PCC 7421).